A 422-amino-acid chain; its full sequence is tRNA hydroxylation protein P (422 aa).

Positions Met-1–Ala-58 are cleaved as a signal peptide.

The protein belongs to the peptidase U32 family.

Functionally, involved in prephenate-dependent formation of 5-hydroxyuridine (ho5U) modification at position 34 in tRNAs, the first step in 5-carboxymethoxyuridine (cmo5U) biosynthesis. The chain is tRNA hydroxylation protein P from Helicobacter pylori (strain ATCC 700392 / 26695) (Campylobacter pylori).